A 131-amino-acid polypeptide reads, in one-letter code: Leptin receptor gene-related protein (131 aa).

Transmembrane regions (helical) follow at residues 7 to 27 (LVGLSFSGAIGLTFLMLGCAL), 32 to 52 (VYWPMFVLIFYFICPIPHFIA), 69 to 89 (LAYFFTTGIVVSAFGFPIILA), and 100 to 120 (GLVLAGNAVIFLTILGFFLVF).

This sequence belongs to the OB-RGRP/VPS55 family.

The protein resides in the golgi apparatus membrane. The protein localises to the endosome membrane. Its function is as follows. Involved in protein trafficking. May be involved in the down-regulation of membrane protein levels. This is Leptin receptor gene-related protein (LEPROT) from Gallus gallus (Chicken).